Here is a 423-residue protein sequence, read N- to C-terminus: GTPase HflX (423 aa).

The Hflx-type G domain occupies 202–366; that stretch reads PAAAIVGYTN…LLETILRNQK (165 aa). GTP-binding positions include 208-215, 233-237, 255-258, 321-324, and 344-346; these read GYTNAGKS, FATLD, DTVG, NKID, and SAK. Positions 215 and 235 each coordinate Mg(2+).

This sequence belongs to the TRAFAC class OBG-HflX-like GTPase superfamily. HflX GTPase family. Monomer. Associates with the 50S ribosomal subunit. The cofactor is Mg(2+).

It is found in the cytoplasm. In terms of biological role, GTPase that associates with the 50S ribosomal subunit and may have a role during protein synthesis or ribosome biogenesis. The polypeptide is GTPase HflX (Lacrimispora saccharolytica (strain ATCC 35040 / DSM 2544 / NRCC 2533 / WM1) (Clostridium saccharolyticum)).